The primary structure comprises 62 residues: Large ribosomal subunit protein bL28 (62 aa).

The tract at residues 1–28 is disordered; sequence MARVCAITGRKARSGNSRSHAMNATKRK.

Belongs to the bacterial ribosomal protein bL28 family.

The sequence is that of Large ribosomal subunit protein bL28 from Bacillus thuringiensis (strain Al Hakam).